Here is a 187-residue protein sequence, read N- to C-terminus: Adenylate kinase (187 aa).

An ATP-binding site is contributed by 10–15 (GSGKGT). The NMP stretch occupies residues 30 to 59 (STGDLLRAEVAAGSPLGLKAKEVMARGDLV). Residues T31, R36, 57-59 (DLV), 85-88 (GYPR), and Q92 each bind AMP. The tract at residues 126 to 136 (GRAKAEGREDD) is LID. R127 serves as a coordination point for ATP. Residues R133 and R144 each coordinate AMP. Position 172 (G172) interacts with ATP.

This sequence belongs to the adenylate kinase family. In terms of assembly, monomer.

The protein localises to the cytoplasm. The catalysed reaction is AMP + ATP = 2 ADP. Its pathway is purine metabolism; AMP biosynthesis via salvage pathway; AMP from ADP: step 1/1. Catalyzes the reversible transfer of the terminal phosphate group between ATP and AMP. Plays an important role in cellular energy homeostasis and in adenine nucleotide metabolism. The chain is Adenylate kinase from Xanthomonas campestris pv. campestris (strain 8004).